A 480-amino-acid polypeptide reads, in one-letter code: Probable histone deacetylase 1-B (480 aa).

The tract at residues 10–321 is histone deacetylase; it reads KVCYYYDGDV…WTYETAVALD (312 aa). His-141 is an active-site residue. Residues 387–480 form a disordered region; sequence DSVHDDSGEE…KRVKEETKSV (94 aa). The span at 401 to 416 shows a compositional bias: basic and acidic residues; the sequence is PDKRISIRSSDKRIAC. Positions 417 to 427 are enriched in acidic residues; it reads DEEFSDSEDEG. A compositionally biased stretch (basic and acidic residues) spans 443 to 480; it reads VKTEEEKEGEDKKDVKEEEKAKDEKTDSKRVKEETKSV.

The protein belongs to the histone deacetylase family. HD type 1 subfamily. Found in a large complex with RBBP4 and MI-2.

The protein resides in the nucleus. Its subcellular location is the cytoplasm. The enzyme catalyses N(6)-acetyl-L-lysyl-[histone] + H2O = L-lysyl-[histone] + acetate. The catalysed reaction is N(6)-acetyl-L-lysyl-[protein] + H2O = L-lysyl-[protein] + acetate. It carries out the reaction N(6)-(2E)-butenoyl-L-lysyl-[protein] + H2O = (2E)-2-butenoate + L-lysyl-[protein]. Its function is as follows. Histone deacetylase that catalyzes the deacetylation of lysine residues on the N-terminal part of the core histones (H2A, H2B, H3 and H4). Histone deacetylation gives a tag for epigenetic repression and plays an important role in transcriptional regulation, cell cycle progression and developmental events. Histone deacetylases act via the formation of large multiprotein complexes. Also functions as a deacetylase for non-histone proteins. In addition to protein deacetylase activity, also has protein-lysine deacylase activity: acts as a protein decrotonylase by mediating decrotonylation ((2E)-butenoyl) of histones. In Xenopus laevis (African clawed frog), this protein is Probable histone deacetylase 1-B (hdac1-b).